Consider the following 185-residue polypeptide: Threonylcarbamoyl-AMP synthase (185 aa).

In terms of domain architecture, YrdC-like spans 4–185 (SWRVQQAARE…LATGEVVRPG (182 aa)).

Belongs to the SUA5 family. TsaC subfamily.

Its subcellular location is the cytoplasm. The enzyme catalyses L-threonine + hydrogencarbonate + ATP = L-threonylcarbamoyladenylate + diphosphate + H2O. Required for the formation of a threonylcarbamoyl group on adenosine at position 37 (t(6)A37) in tRNAs that read codons beginning with adenine. Catalyzes the conversion of L-threonine, HCO(3)(-)/CO(2) and ATP to give threonylcarbamoyl-AMP (TC-AMP) as the acyladenylate intermediate, with the release of diphosphate. The sequence is that of Threonylcarbamoyl-AMP synthase from Pseudomonas entomophila (strain L48).